We begin with the raw amino-acid sequence, 328 residues long: 17-beta-hydroxysteroid dehydrogenase type 1 (328 aa).

NADP(+) contacts are provided by residues 10–38 (GCSS…ATLR) and Asp-66. Position 135 is a phosphoserine; by PKA (Ser-135). Position 143 (Ser-143) interacts with substrate. Tyr-156 acts as the Proton acceptor in catalysis. NADP(+) is bound at residue Lys-160. The interval 291–328 (KAEAGAEAGGGAGPGAEDEAGRGAVGDPELGDPPAAPQ) is disordered.

The protein belongs to the short-chain dehydrogenases/reductases (SDR) family. In terms of assembly, homodimer. Exists predominantly as a homodimer but also exits as monomer.

The protein localises to the cytoplasm. The catalysed reaction is 17beta-estradiol + NAD(+) = estrone + NADH + H(+). The enzyme catalyses 17beta-estradiol + NADP(+) = estrone + NADPH + H(+). It catalyses the reaction testosterone + NADP(+) = androst-4-ene-3,17-dione + NADPH + H(+). The protein operates within steroid biosynthesis; estrogen biosynthesis. Functionally, favors the reduction of estrogens and androgens. Converts estrone (E1) to a more potent estrogen, 17beta-estradiol (E2). Also has 20-alpha-HSD activity. Uses preferentially NADH. The chain is 17-beta-hydroxysteroid dehydrogenase type 1 from Homo sapiens (Human).